A 121-amino-acid polypeptide reads, in one-letter code: Mitochondrial intermembrane space cysteine motif-containing protein MIX14 (121 aa).

CHCH domains are found at residues 14–56 and 60–105; these read VANC…VPSV and MSEC…VKNK. 4 short sequence motifs (cx9C motif) span residues 17 to 27, 38 to 48, 63 to 73, and 87 to 97; these read CPQEFLQYHKC, CKDGRMILSTC, CSEPMKKYDQC, and CLGFLQDLRKC. Disulfide bonds link Cys-17-Cys-48, Cys-27-Cys-38, Cys-63-Cys-97, and Cys-73-Cys-87.

Its subcellular location is the mitochondrion intermembrane space. The polypeptide is Mitochondrial intermembrane space cysteine motif-containing protein MIX14 (MIX14) (Saccharomyces cerevisiae (strain ATCC 204508 / S288c) (Baker's yeast)).